Consider the following 312-residue polypeptide: Ribosomal RNA small subunit methyltransferase H (312 aa).

S-adenosyl-L-methionine contacts are provided by residues 34–36, Asp-54, Phe-81, Asp-102, and Gln-109; that span reads AGH.

The protein belongs to the methyltransferase superfamily. RsmH family.

It is found in the cytoplasm. The enzyme catalyses cytidine(1402) in 16S rRNA + S-adenosyl-L-methionine = N(4)-methylcytidine(1402) in 16S rRNA + S-adenosyl-L-homocysteine + H(+). Functionally, specifically methylates the N4 position of cytidine in position 1402 (C1402) of 16S rRNA. In Geobacter sp. (strain M21), this protein is Ribosomal RNA small subunit methyltransferase H.